A 638-amino-acid polypeptide reads, in one-letter code: 1-deoxy-D-xylulose-5-phosphate synthase (638 aa).

Thiamine diphosphate contacts are provided by residues His79 and 120-122 (AHS). Asp151 is a Mg(2+) binding site. Thiamine diphosphate-binding positions include 152 to 153 (GA), Asn180, Tyr289, and Glu371. Asn180 lines the Mg(2+) pocket.

Belongs to the transketolase family. DXPS subfamily. In terms of assembly, homodimer. It depends on Mg(2+) as a cofactor. Requires thiamine diphosphate as cofactor.

The enzyme catalyses D-glyceraldehyde 3-phosphate + pyruvate + H(+) = 1-deoxy-D-xylulose 5-phosphate + CO2. It participates in metabolic intermediate biosynthesis; 1-deoxy-D-xylulose 5-phosphate biosynthesis; 1-deoxy-D-xylulose 5-phosphate from D-glyceraldehyde 3-phosphate and pyruvate: step 1/1. Catalyzes the acyloin condensation reaction between C atoms 2 and 3 of pyruvate and glyceraldehyde 3-phosphate to yield 1-deoxy-D-xylulose-5-phosphate (DXP). The protein is 1-deoxy-D-xylulose-5-phosphate synthase of Rhizobium johnstonii (strain DSM 114642 / LMG 32736 / 3841) (Rhizobium leguminosarum bv. viciae).